A 324-amino-acid polypeptide reads, in one-letter code: D-alanine--D-alanine ligase (324 aa).

Residues 121–321 (NQYLKGFGIR…IKDVMTDIIE (201 aa)) enclose the ATP-grasp domain. Residue 149 to 204 (INKIGLPCFIKPNAGGSSFGVTKVKTKEDIQPAIEKAFEESDEVMIEAFMKGTEIT) coordinates ATP. Residues Asp275, Glu288, and Asn290 each contribute to the Mg(2+) site.

The protein belongs to the D-alanine--D-alanine ligase family. It depends on Mg(2+) as a cofactor. Mn(2+) serves as cofactor.

It localises to the cytoplasm. It catalyses the reaction 2 D-alanine + ATP = D-alanyl-D-alanine + ADP + phosphate + H(+). It participates in cell wall biogenesis; peptidoglycan biosynthesis. Functionally, cell wall formation. The polypeptide is D-alanine--D-alanine ligase (Phocaeicola vulgatus (strain ATCC 8482 / DSM 1447 / JCM 5826 / CCUG 4940 / NBRC 14291 / NCTC 11154) (Bacteroides vulgatus)).